A 639-amino-acid chain; its full sequence is MDLKSWILLSCTLLPLSVTSYECYVTPCTRDIIIVVDGSSSMQTSTYVSQEINMITKLTYSWTLDDAKVRLALVGAYLGNEFNGLDYFTDSSLIEKRLQSFRLAAMQYGLFSGDFNTTVRFLDERYVGPRATFGPRANVQKRIIIFSAHKGASDIASTKSKLQEFAQLGYAVTIVGIGVSEDVYKGTFYHKFVSVQWFELGVVAQSIIDTITEDGICFLDQGWTTPKQEICTTSTTTTRAPTTTTTVTTVKGVTGKPATTAKPVPPTHPPFPVGDYQDCSCTTQSLYIDIIFVIDVSEGMGQGGLMMVKAEINTLVGQMSLDPNIQKHVQVGLIKYSDKAEVVFKPSDYTNEDEFTEDLWSDPRLEDVDEKSDEVNLHLGLQQAAKMTASMRNGVRKVIVVYAASYNDEGNDDARQIAANIRETGYAIITVAFVEPESSNLVMKIGEIASPRMNFTSFRDDLLVEQMEDALCQVNCYCPNGWKQLVLENRKYGECFFPTKIDASWTASKFECPVLSKEHTGNGHLVYVNSELKNTFLNQFYMDNWYPENQENPNYDIGYYYDQATKKFIWVNGVTNNPYSNWATGHPDVKQGDCVMAKLLKDSKNDFRWNSVSCTSEYGRGLCQEAACDTDFYCAPSSN.

Residues 1-19 (MDLKSWILLSCTLLPLSVT) form the signal peptide. VWFA domains follow at residues 31–178 (DIII…VGIG) and 289–474 (DIIF…LCQV). One can recognise a C-type lectin domain in the interval 491-618 (KYGECFFPTK…WNSVSCTSEY (128 aa)). The cysteines at positions 594 and 614 are disulfide-linked.

The protein localises to the secreted. In Caenorhabditis elegans, this protein is C-type lectin domain-containing protein 160 (clec-160).